A 316-amino-acid polypeptide reads, in one-letter code: Lys-63-specific deubiquitinase BRCC36 (316 aa).

The residue at position 2 (Ala-2) is an N-acetylalanine. Residues 12–179 enclose the MPN domain; sequence VHLESDAFLV…YTCFQSIQAQ (168 aa). Positions 122, 124, and 135 each coordinate Zn(2+). The JAMM motif motif lies at 122 to 135; the sequence is HSHPHITVWPSHVD. At Ser-258 the chain carries Phosphoserine.

This sequence belongs to the peptidase M67A family. BRCC36 subfamily. Component of the ARISC complex, at least composed of UIMC1/RAP80, ABRAXAS1, BRCC3/BRCC36, BABAM2 and BABAM1/NBA1. Component of the BRCA1-A complex, at least composed of BRCA1, BARD1, UIMC1/RAP80, ABRAXAS1, BRCC3/BRCC36, BABAM2 and BABAM1/NBA1. In the BRCA1-A complex, interacts directly with ABRAXAS1 and BABAM2. Component of the BRISC complex, at least composed of ABRAXAS2, BRCC3/BRCC36, BABAM2 and BABAM1/NBA1. Identified in a complex with SHMT2 and the other subunits of the BRISC complex. In the BRISC complex, interacts directly with ABRAXAS2. Identified in a complex with ABRAXAS2 and NUMA1. The BRISC complex interacts with the CSN complex. Component of the BRCA1/BRCA2 containing complex (BRCC), which also contains BRCA1, BRCA2, BARD1, BABAM2 and RAD51. BRCC is a ubiquitin E3 ligase complex that enhances cellular survival following DNA damage. Interacts with BRCA1. Binds polyubiquitin. Interacts with PWWP2B. Interacts with HDAC1; this interaction is enhanced in the presence of PWWP2B. It depends on Zn(2+) as a cofactor.

The protein localises to the nucleus. Its subcellular location is the cytoplasm. The protein resides in the cytoskeleton. It localises to the spindle pole. Metalloprotease that specifically cleaves 'Lys-63'-linked polyubiquitin chains. Does not have activity toward 'Lys-48'-linked polyubiquitin chains. Component of the BRCA1-A complex, a complex that specifically recognizes 'Lys-63'-linked ubiquitinated histones H2A and H2AX at DNA lesions sites, leading to target the BRCA1-BARD1 heterodimer to sites of DNA damage at double-strand breaks (DSBs). In the BRCA1-A complex, it specifically removes 'Lys-63'-linked ubiquitin on histones H2A and H2AX, antagonizing the RNF8-dependent ubiquitination at double-strand breaks (DSBs). Catalytic subunit of the BRISC complex, a multiprotein complex that specifically cleaves 'Lys-63'-linked ubiquitin in various substrates. Mediates the specific 'Lys-63'-specific deubiquitination associated with the COP9 signalosome complex (CSN), via the interaction of the BRISC complex with the CSN complex. The BRISC complex is required for normal mitotic spindle assembly and microtubule attachment to kinetochores via its role in deubiquitinating NUMA1. Plays a role in interferon signaling via its role in the deubiquitination of the interferon receptor IFNAR1; deubiquitination increases IFNAR1 activity by enhancing its stability and cell surface expression. Acts as a regulator of the NLRP3 inflammasome by mediating deubiquitination of NLRP3, leading to NLRP3 inflammasome assembly. Down-regulates the response to bacterial lipopolysaccharide (LPS) via its role in IFNAR1 deubiquitination. Deubiquitinates HDAC1 and PWWP2B leading to their stabilization. This Callithrix jacchus (White-tufted-ear marmoset) protein is Lys-63-specific deubiquitinase BRCC36 (BRCC3).